The chain runs to 136 residues: Protein PsiE (136 aa).

A run of 4 helical transmembrane segments spans residues 15–35, 55–75, 82–102, and 108–128; these read ILQT…VVFL, YELV…ALIV, FHFP…RLII, and PLDV…LWLC.

It belongs to the PsiE family.

It localises to the cell inner membrane. In Escherichia coli (strain SE11), this protein is Protein PsiE.